The sequence spans 130 residues: Holo-[acyl-carrier-protein] synthase (130 aa).

The Mg(2+) site is built by D9 and E58.

The protein belongs to the P-Pant transferase superfamily. AcpS family. Mg(2+) serves as cofactor.

The protein localises to the cytoplasm. The enzyme catalyses apo-[ACP] + CoA = holo-[ACP] + adenosine 3',5'-bisphosphate + H(+). Functionally, transfers the 4'-phosphopantetheine moiety from coenzyme A to a Ser of acyl-carrier-protein. In Mycobacterium leprae (strain Br4923), this protein is Holo-[acyl-carrier-protein] synthase.